Here is a 410-residue protein sequence, read N- to C-terminus: Regulator of microtubule dynamics protein 2 (410 aa).

The chain crosses the membrane as a helical span at residues 9–28 (LILGIMAGTAGISLLAFWYH). Serine 51 carries the post-translational modification Phosphoserine. Positions 69–110 (QRRQLQILEKLNELLTNMEELKEEIRFLKETIPKLEECIQDE) form a coiled coil. The disordered stretch occupies residues 120-151 (ISPQHRARKKKGTTVQRSATSNSSEEAESEGG). Serine 121 is modified (phosphoserine). Positions 121–131 (SPQHRARKKKG) are enriched in basic residues. Threonine 139 carries the phosphothreonine modification. At tyrosine 152 the chain carries Phosphotyrosine. 2 positions are modified to phosphothreonine: threonine 154 and threonine 157.

Belongs to the RMDN family. Interacts with microtubules.

It is found in the membrane. The protein resides in the cytoplasm. Its subcellular location is the cytoskeleton. It localises to the spindle. The protein localises to the spindle pole. The sequence is that of Regulator of microtubule dynamics protein 2 (Rmdn2) from Mus musculus (Mouse).